Consider the following 263-residue polypeptide: Hydroxyethylthiazole kinase (263 aa).

Met-41 lines the substrate pocket. ATP-binding residues include Arg-117 and Thr-163. Gly-190 provides a ligand contact to substrate.

This sequence belongs to the Thz kinase family. Requires Mg(2+) as cofactor.

It catalyses the reaction 5-(2-hydroxyethyl)-4-methylthiazole + ATP = 4-methyl-5-(2-phosphooxyethyl)-thiazole + ADP + H(+). The protein operates within cofactor biosynthesis; thiamine diphosphate biosynthesis; 4-methyl-5-(2-phosphoethyl)-thiazole from 5-(2-hydroxyethyl)-4-methylthiazole: step 1/1. Its function is as follows. Catalyzes the phosphorylation of the hydroxyl group of 4-methyl-5-beta-hydroxyethylthiazole (THZ). The protein is Hydroxyethylthiazole kinase of Exiguobacterium sp. (strain ATCC BAA-1283 / AT1b).